We begin with the raw amino-acid sequence, 401 residues long: Mu-type opioid receptor (401 aa).

Over 1–69 the chain is Extracellular; the sequence is MDSGAVPTNA…CPSAGSPSMI (69 aa). Residues Asn-9, Asn-12, Asn-34, Asn-41, and Asn-49 are each glycosylated (N-linked (GlcNAc...) asparagine). Residues 70–94 traverse the membrane as a helical segment; the sequence is TAIIIMALYSIVCVVGLFGNFLVMY. Over 95–107 the chain is Cytoplasmic; it reads VIVRYTKMKTATN. Residues 108 to 132 form a helical membrane-spanning segment; the sequence is IYIFNLALADALATSTLPFQSVNYL. Topologically, residues 133 to 143 are extracellular; sequence MGTWPFGTILC. A disulfide bridge links Cys-143 with Cys-220. Residues 144-166 form a helical membrane-spanning segment; it reads KIVISIDYYNMFTSIFTLCTMSV. The Cytoplasmic segment spans residues 167 to 186; it reads DRYIAVCHPVKALDLRTPRN. Position 169 is a phosphotyrosine (Tyr-169). Residues 187 to 208 form a helical membrane-spanning segment; it reads AKIINICNWILSSAIGLPVMFM. Topologically, residues 209–231 are extracellular; it reads ATTKYRQGSIDCTLTFSHPTWYW. The helical transmembrane segment at 232–256 threads the bilayer; the sequence is ENLLKICVFIFAFIMPILIITVCYG. The Cytoplasmic segment spans residues 257–280; the sequence is LMILRLKSVRMLSGSKEKDRNLRR. Residues 281-307 form a helical membrane-spanning segment; the sequence is ITRMVLVVVAVFIVCWTPIHIYVIIKA. At 308–315 the chain is on the extracellular side; sequence LITIPETT. The helical transmembrane segment at 316–339 threads the bilayer; it reads FQTVSWHFCIALGYTNSCLNPVLY. The NPxxY; plays a role in stabilizing the activated conformation of the receptor motif lies at 335–339; it reads NPVLY. Residues 340-401 lie on the Cytoplasmic side of the membrane; it reads AFLDENFKRC…NLEAETTPLP (62 aa). The S-palmitoyl cysteine moiety is linked to residue Cys-354. Residues 365–389 form a disordered region; sequence NSTRIRQNTRDHPSTANTVDRTNHQ. Ser-366 carries the post-translational modification Phosphoserine. Phosphothreonine is present on Thr-373. The residue at position 378 (Ser-378) is a Phosphoserine. A Phosphothreonine modification is found at Thr-397.

Belongs to the G-protein coupled receptor 1 family. As to quaternary structure, forms homooligomers and heterooligomers with other GPCRs, such as OPRD1, OPRK1, OPRL1, NPFFR2, ADRA2A, SSTR2, CNR1 and CCR5 (probably in dimeric forms). Interacts with heterotrimeric G proteins; interaction with a heterotrimeric complex containing GNAI1, GNB1 and GNG2 stabilizes the active conformation of the receptor and increases its affinity for endomorphin-2, the synthetic opioid peptide DAMGO and for morphinan agonists. Interacts with PPL; the interaction disrupts agonist-mediated G-protein activation. Interacts (via C-terminus) with DNAJB4 (via C-terminus). Interacts with calmodulin; the interaction inhibits the constitutive activity of OPRM1; it abolishes basal and attenuates agonist-stimulated G-protein coupling. Interacts with FLNA, PLD2, RANBP9 and WLS and GPM6A. Interacts with RTP4. Interacts with SYP and GNAS. Interacts with RGS9, RGS17, RGS20, RGS4, PPP1R9B and HINT1. Phosphorylated. Differentially phosphorylated in basal and agonist-induced conditions. Agonist-mediated phosphorylation modulates receptor internalization. Phosphorylated by GRK2 in a agonist-dependent manner. Phosphorylation at Tyr-169 requires receptor activation, is dependent on non-receptor protein tyrosine kinase Src and results in a decrease in agonist efficacy by reducing G-protein coupling efficiency. Phosphorylated on tyrosine residues; the phosphorylation is involved in agonist-induced G-protein-independent receptor down-regulation. Phosphorylation at Ser-378 is involved in G-protein-dependent but not beta-arrestin-dependent activation of the ERK pathway. Post-translationally, ubiquitinated. A basal ubiquitination seems not to be related to degradation. Ubiquitination is increased upon formation of OPRM1:OPRD1 oligomers leading to proteasomal degradation; the ubiquitination is diminished by RTP4.

It localises to the cell membrane. Its subcellular location is the cell projection. The protein resides in the axon. The protein localises to the perikaryon. It is found in the dendrite. It localises to the endosome. In terms of biological role, receptor for endogenous opioids such as beta-endorphin and endomorphin. Receptor for natural and synthetic opioids including morphine, heroin, DAMGO, fentanyl, etorphine, buprenorphin and methadone. Also activated by enkephalin peptides, such as Met-enkephalin or Met-enkephalin-Arg-Phe, with higher affinity for Met-enkephalin-Arg-Phe. Agonist binding to the receptor induces coupling to an inactive GDP-bound heterotrimeric G-protein complex and subsequent exchange of GDP for GTP in the G-protein alpha subunit leading to dissociation of the G-protein complex with the free GTP-bound G-protein alpha and the G-protein beta-gamma dimer activating downstream cellular effectors. The agonist- and cell type-specific activity is predominantly coupled to pertussis toxin-sensitive G(i) and G(o) G alpha proteins, GNAI1, GNAI2, GNAI3 and GNAO1, and to a lesser extent to pertussis toxin-insensitive G alpha proteins GNAZ and GNA15. They mediate an array of downstream cellular responses, including inhibition of adenylate cyclase activity and both N-type and L-type calcium channels, activation of inward rectifying potassium channels, mitogen-activated protein kinase (MAPK), phospholipase C (PLC), phosphoinositide/protein kinase (PKC), phosphoinositide 3-kinase (PI3K) and regulation of NF-kappa-B. Also couples to adenylate cyclase stimulatory G alpha proteins. The selective temporal coupling to G-proteins and subsequent signaling can be regulated by RGSZ proteins, such as RGS9, RGS17 and RGS4. Phosphorylation by members of the GPRK subfamily of Ser/Thr protein kinases and association with beta-arrestins is involved in short-term receptor desensitization. Beta-arrestins associate with the GPRK-phosphorylated receptor and uncouple it from the G-protein thus terminating signal transduction. The phosphorylated receptor is internalized through endocytosis via clathrin-coated pits which involves beta-arrestins. The activation of the ERK pathway occurs either in a G-protein-dependent or a beta-arrestin-dependent manner and is regulated by agonist-specific receptor phosphorylation. Acts as a class A G-protein coupled receptor (GPCR) which dissociates from beta-arrestin at or near the plasma membrane and undergoes rapid recycling. Receptor down-regulation pathways are varying with the agonist and occur dependent or independent of G-protein coupling. Endogenous ligands induce rapid desensitization, endocytosis and recycling. Heterooligomerization with other GPCRs can modulate agonist binding, signaling and trafficking properties. Involved in neurogenesis. The sequence is that of Mu-type opioid receptor (OPRM1) from Bos taurus (Bovine).